Consider the following 419-residue polypeptide: Dynein regulatory complex protein 9 (419 aa).

Disordered regions lie at residues 1–47 and 393–419; these read MEGE…SPEV and SFKMPKKEKDDSKDAKGKEKDKRRGKK. The span at 34 to 44 shows a compositional bias: acidic residues; sequence EELEEEEEETS. The 30-residue stretch at 371-400 folds into the IQ domain; that stretch reads ELRSIVKLQAWWRGTVVRREIGSFKMPKKE.

The protein belongs to the DRC9 family. As to quaternary structure, component of the nexin-dynein regulatory complex (N-DRC). Interacts (via IQ domain) with CALM when calcium levels are low. Does not interact with CALM in the presence of Ca(2+). Interacts with the HSP70 proteins HSPA1L and HSPA8. May form a complex with CAMK4 and HSP70.

It is found in the cytoplasm. Its subcellular location is the cell projection. The protein resides in the cilium. The protein localises to the flagellum. It localises to the cytoskeleton. It is found in the flagellum axoneme. Component of the nexin-dynein regulatory complex (N-DRC), a key regulator of ciliary/flagellar motility which maintains the alignment and integrity of the distal axoneme and regulates microtubule sliding in motile axonemes. Binds calmodulin when cellular Ca(2+) levels are low and thereby contributes to the regulation of calcium and calmodulin-dependent protein kinase IV (CAMK4) activity; contributes to the regulation of CAMK4 signaling cascades. Required for normal axoneme assembly in sperm flagella, normal sperm tail formation and for male fertility. In Rattus norvegicus (Rat), this protein is Dynein regulatory complex protein 9 (Iqcg).